Here is a 508-residue protein sequence, read N- to C-terminus: MWRQAKWNEPLIFELNKSGAARQGFLINKDEEIRSQIKEMKIPKNLLRENEPDLPSLSELEVVRHFVRLSQMNFGVDIGIMPLGSCTMKYNPKIEEKATAITEFHHPLEDEDYIQGILEMIYELQNWFSEITGMDECSLQVPAGSAGEFAGVLMIKKYHEEHNRNYKDTILVADTAHGTNPASAAMAGYKVMYVKSNAEGLVDMDILREIVNDKTAGFMLTNPNTLGLFEENILEISKIIHSTNAVLYYDGANLNGVLGIARPGDMGFDIVHLNLHKTFAVPHGGGGPGAGAICAKGELVNYLPYPMVEKVNGKYKLSKIPKNSIGKIATFYGNVGNLARSFAYILGLGPQGIQMIGKMSTLATNYLIAKLRDVKELELIAPNRHRKHEVVFSVKQLMENYGVSANDVAKALLDNGFYAPTIYFPPIVEEALMIEPTETETKETLDMFAETLKKIVNDAKINPEQVMKSPNNTSIARLDQAYANHPSTITPTYRVLRLRRLGKIDYLK.

Lys277 is subject to N6-(pyridoxal phosphate)lysine.

Belongs to the GcvP family. C-terminal subunit subfamily. In terms of assembly, the glycine cleavage system is composed of four proteins: P, T, L and H. In this organism, the P 'protein' is a heterodimer of two subunits. It depends on pyridoxal 5'-phosphate as a cofactor.

It catalyses the reaction N(6)-[(R)-lipoyl]-L-lysyl-[glycine-cleavage complex H protein] + glycine + H(+) = N(6)-[(R)-S(8)-aminomethyldihydrolipoyl]-L-lysyl-[glycine-cleavage complex H protein] + CO2. Functionally, the glycine cleavage system catalyzes the degradation of glycine. The P protein binds the alpha-amino group of glycine through its pyridoxal phosphate cofactor; CO(2) is released and the remaining methylamine moiety is then transferred to the lipoamide cofactor of the H protein. The sequence is that of Probable glycine dehydrogenase (decarboxylating) subunit 2 from Saccharolobus solfataricus (strain ATCC 35092 / DSM 1617 / JCM 11322 / P2) (Sulfolobus solfataricus).